Here is a 245-residue protein sequence, read N- to C-terminus: MIVDLNADLGEGCANDQALLQLVSSANIACGFHAGDAQTMRQSVRWALQYGVAIGAHPSFPDRENFGRTRMQLPAETVYAQVVYQLGALAAIARAEGGVMVHVKPHGMLYNQAAVEPELAQAIARAVKAVDPTLRLVGLAGSELIRAGEEQGLVTRQEVFADRGYQADGTLVPRGQPGALITSDELALAQTLEMVRHHRVRTLSGTWAAVQAETVCLHGDGEHALEYARTLRERFAVEGISVSAQ.

The protein belongs to the LamB/PxpA family. In terms of assembly, forms a complex composed of PxpA, PxpB and PxpC.

It catalyses the reaction 5-oxo-L-proline + ATP + 2 H2O = L-glutamate + ADP + phosphate + H(+). Functionally, catalyzes the cleavage of 5-oxoproline to form L-glutamate coupled to the hydrolysis of ATP to ADP and inorganic phosphate. The sequence is that of 5-oxoprolinase subunit A from Serratia proteamaculans (strain 568).